We begin with the raw amino-acid sequence, 74 residues long: Conotoxin AbVIL (74 aa).

The N-terminal stretch at 1–17 (VLIIAVLFLTACQLTTA) is a signal peptide. Positions 17–41 (AETSSRGEQKHRAPRSTDKNSRMTK) are disordered. A propeptide spanning residues 18–40 (ETSSRGEQKHRAPRSTDKNSRMT) is cleaved from the precursor. Basic and acidic residues predominate over residues 21–37 (SRGEQKHRAPRSTDKNS). Intrachain disulfides connect Cys43-Cys57, Cys50-Cys61, and Cys56-Cys68.

Belongs to the conotoxin O1 superfamily. In terms of tissue distribution, expressed by the venom duct.

The protein localises to the secreted. In Conus abbreviatus (Abbreviated cone), this protein is Conotoxin AbVIL.